The primary structure comprises 524 residues: uncharacterized protein (524 aa).

The interval 1–65 (MSDPFFTRPE…IDEENEDTYE (65 aa)) is disordered. Residues 21–32 (SKREKENQKLER) show a composition bias toward basic and acidic residues. Over residues 51-64 (GFEDEIDEENEDTY) the composition is skewed to acidic residues. 7 WD repeats span residues 131–176 (IETA…DTEN), 206–245 (DHVK…PQHC), 248–287 (HHRD…YIET), 290–329 (GHQD…QLVF), 342–380 (YMEG…PLFT), 409–448 (PQPR…RSFE), and 457–503 (SVYG…PNSG).

Its subcellular location is the nucleus. This is an uncharacterized protein from Schizosaccharomyces pombe (strain 972 / ATCC 24843) (Fission yeast).